We begin with the raw amino-acid sequence, 958 residues long: Coiled-coil domain-containing protein 80 (958 aa).

The signal sequence occupies residues 1 to 21 (MNWMPALSLALLWTAWLVCGS). 5 disordered regions span residues 30 to 99 (RGSH…TRTR), 290 to 335 (VVED…TVRK), 358 to 396 (TATRATTRTVTTASRPTTTTTPLPTTQRTWTTKSHTTTE), 424 to 452 (ANRRDRQRGHPEKHLAATRKPSKGGRYES), and 467 to 617 (ASMS…QPPR). Residues 358 to 389 (TATRATTRTVTTASRPTTTTTPLPTTQRTWTT) show a composition bias toward low complexity. 2 stretches are compositionally biased toward basic and acidic residues: residues 425–438 (NRRDRQRGHPEKHL) and 471–487 (RFKDNRTDRKDYNHRDL). Positions 495-506 (KPTKTKPPKKKT) are enriched in basic residues. 2 stretches are compositionally biased toward basic and acidic residues: residues 547–589 (KKHE…DKDR) and 597–606 (SRTENEDFPK).

The protein belongs to the CCDC80 family. Binds to various extracellular matrix proteins.

The protein localises to the secreted. The protein resides in the extracellular space. It localises to the extracellular matrix. Its function is as follows. Promotes cell adhesion and matrix assembly. May play a role in eye formation. The polypeptide is Coiled-coil domain-containing protein 80 (CCDC80) (Gallus gallus (Chicken)).